Here is a 338-residue protein sequence, read N- to C-terminus: Ketol-acid reductoisomerase (NADP(+)) (338 aa).

The KARI N-terminal Rossmann domain occupies 1-181 (MKIYYDKDCN…GGGRAGIIET (181 aa)). NADP(+)-binding positions include 24–27 (YGSQ), K47, S50, S52, and 82–85 (DEIQ). H107 is an active-site residue. NADP(+) is bound at residue G133. The KARI C-terminal knotted domain occupies 182-327 (SFKEETETDL…ARLRSMMSWI (146 aa)). Residues D190, E194, E226, and E230 each contribute to the Mg(2+) site. Position 251 (S251) interacts with substrate.

The protein belongs to the ketol-acid reductoisomerase family. The cofactor is Mg(2+).

The enzyme catalyses (2R)-2,3-dihydroxy-3-methylbutanoate + NADP(+) = (2S)-2-acetolactate + NADPH + H(+). The catalysed reaction is (2R,3R)-2,3-dihydroxy-3-methylpentanoate + NADP(+) = (S)-2-ethyl-2-hydroxy-3-oxobutanoate + NADPH + H(+). The protein operates within amino-acid biosynthesis; L-isoleucine biosynthesis; L-isoleucine from 2-oxobutanoate: step 2/4. Its pathway is amino-acid biosynthesis; L-valine biosynthesis; L-valine from pyruvate: step 2/4. Its function is as follows. Involved in the biosynthesis of branched-chain amino acids (BCAA). Catalyzes an alkyl-migration followed by a ketol-acid reduction of (S)-2-acetolactate (S2AL) to yield (R)-2,3-dihydroxy-isovalerate. In the isomerase reaction, S2AL is rearranged via a Mg-dependent methyl migration to produce 3-hydroxy-3-methyl-2-ketobutyrate (HMKB). In the reductase reaction, this 2-ketoacid undergoes a metal-dependent reduction by NADPH to yield (R)-2,3-dihydroxy-isovalerate. The protein is Ketol-acid reductoisomerase (NADP(+)) of Geobacter sulfurreducens (strain ATCC 51573 / DSM 12127 / PCA).